The sequence spans 372 residues: 4-hydroxy-3-methylbut-2-en-1-yl diphosphate synthase (flavodoxin) (372 aa).

4 residues coordinate [4Fe-4S] cluster: Cys270, Cys273, Cys305, and Glu312.

It belongs to the IspG family. The cofactor is [4Fe-4S] cluster.

It carries out the reaction (2E)-4-hydroxy-3-methylbut-2-enyl diphosphate + oxidized [flavodoxin] + H2O + 2 H(+) = 2-C-methyl-D-erythritol 2,4-cyclic diphosphate + reduced [flavodoxin]. Its pathway is isoprenoid biosynthesis; isopentenyl diphosphate biosynthesis via DXP pathway; isopentenyl diphosphate from 1-deoxy-D-xylulose 5-phosphate: step 5/6. Converts 2C-methyl-D-erythritol 2,4-cyclodiphosphate (ME-2,4cPP) into 1-hydroxy-2-methyl-2-(E)-butenyl 4-diphosphate. The sequence is that of 4-hydroxy-3-methylbut-2-en-1-yl diphosphate synthase (flavodoxin) from Vibrio parahaemolyticus serotype O3:K6 (strain RIMD 2210633).